We begin with the raw amino-acid sequence, 117 residues long: uncharacterized protein (117 aa).

This is an uncharacterized protein from Methanocaldococcus jannaschii (strain ATCC 43067 / DSM 2661 / JAL-1 / JCM 10045 / NBRC 100440) (Methanococcus jannaschii).